The sequence spans 258 residues: Hydroxyacylglutathione hydrolase (258 aa).

Histidine 52, histidine 54, aspartate 56, histidine 57, histidine 109, aspartate 126, and histidine 164 together coordinate Zn(2+).

Belongs to the metallo-beta-lactamase superfamily. Glyoxalase II family. Monomer. Zn(2+) is required as a cofactor.

The catalysed reaction is an S-(2-hydroxyacyl)glutathione + H2O = a 2-hydroxy carboxylate + glutathione + H(+). Its pathway is secondary metabolite metabolism; methylglyoxal degradation; (R)-lactate from methylglyoxal: step 2/2. Functionally, thiolesterase that catalyzes the hydrolysis of S-D-lactoyl-glutathione to form glutathione and D-lactic acid. The chain is Hydroxyacylglutathione hydrolase from Xylella fastidiosa (strain 9a5c).